The primary structure comprises 217 residues: MSFASGCTPVSFDKLFEVSSGDKVSRENWGMIARPEPQHDSLKRRNTTSSIAKKKAKMTRGDEQITDETARKAATQLLDQIQDTPGRISLNFETPEAASVCPIPTSLNQIVNTKWTVNQLQEGQLTMLLAQDANKFKSLGVKNIKKGSVETQILPRQMDVKEIVEKLKKQDNDSDQFVGYAAAVANVLRRCDAETAQKITQAITATIEKEAPSIVNC.

The tract at residues 33-65 (ARPEPQHDSLKRRNTTSSIAKKKAKMTRGDEQI) is disordered. Basic residues predominate over residues 44–58 (RRNTTSSIAKKKAKM).

In terms of assembly, interacts with double-stranded RNA-specific adenosine deaminase adr-2. As to expression, expressed in main body hypodermal cells, the hypodermal seam cells, pharynx, intestine and some neurons.

The protein resides in the nucleus. Functionally, required for the A-I editing activity of the double-stranded RNA-specific adenosine deaminase adr-2 by facilitating adr-2 nuclear localization. The sequence is that of Adr-2-binding protein 1 from Caenorhabditis elegans.